A 216-amino-acid chain; its full sequence is MPELVFFSGTMDCGKSTLALQIEHNRSARGLAGMIFTRDDRAGEGKLSSRLGLVTDAVEVGDGQDLYAHVVDHLSQGGRVDYVIADEAQFLAPDQIDQLARVVDDLDVDVYAFGITTDFRSKLFPGSQRLVELADRVEVLQVEALCWCGARATHNARTVGGVMVVEGAQVVVGDVAQSPDEIGYEVLCRRHHRRRMTSATARAAALSPDVLPVTAT.

Residues Gly-9–Ser-16 and Asp-86–Gln-89 contribute to the ATP site. Glu-87 serves as the catalytic Proton acceptor.

It belongs to the thymidine kinase family. Homotetramer.

It is found in the cytoplasm. The enzyme catalyses thymidine + ATP = dTMP + ADP + H(+). This chain is Thymidine kinase, found in Streptomyces coelicolor (strain ATCC BAA-471 / A3(2) / M145).